A 446-amino-acid chain; its full sequence is Oxysterols receptor LXR-beta (446 aa).

Residues 1–69 (MSSPTSSLDT…PERKRKKGPA (69 aa)) form a disordered region. A transactivation AF-1; required for ligand-independent transactivation function region spans residues 1–76 (MSSPTSSLDT…GPAPKMLGHE (76 aa)). The span at 17 to 28 (SPQPSTSATSPT) shows a compositional bias: low complexity. A DNA-binding region (nuclear receptor) is located at residues 75-152 (HELCRVCGDK…AGMREQCVLS (78 aa)). NR C4-type zinc fingers lie at residues 78–98 (CRVCGDKASGFHYNVLSCEGC) and 116–140 (CRGSGTCQMDAFMRRKCQLCRLRKC). The interval 159–201 (KRIQKQQQQQPPPPSEPAASSSGRPAASPGTSEASSQGSGEGE) is disordered. The span at 175 to 196 (PAASSSGRPAASPGTSEASSQG) shows a compositional bias: low complexity. The transactivation AF-2; required for ligand-dependent transactivation function; mediates interaction with CCAR2 stretch occupies residues 205–446 (LTAAQELMIQ…LLSEIWDVHE (242 aa)). The NR LBD domain maps to 208-446 (AQELMIQQLV…LLSEIWDVHE (239 aa)). Glycyl lysine isopeptide (Lys-Gly) (interchain with G-Cter in SUMO2) cross-links involve residues lysine 395 and lysine 433.

It belongs to the nuclear hormone receptor family. NR1 subfamily. As to quaternary structure, forms a heterodimer with RXR. Interacts with CCAR2 (via N-terminus) in a ligand-independent manner. Interacts (when sumoylated) with GPS2; interaction with GPS2 onto hepatic acute phase protein promoters prevents N-Cor corepressor complex dissociation. Interacts with ABCA12 and ABCA1; this interaction is required for ABCA1 localization to the cell surface and is necessary for its normal activity and stability. Post-translationally, sumoylated by SUMO2 at Lys-395 and Lys-433 during the hepatic acute phase response, leading to promote interaction with GPS2 and prevent N-Cor corepressor complex dissociation. As to expression, ubiquitous.

Its subcellular location is the nucleus. Functionally, nuclear receptor that exhibits a ligand-dependent transcriptional activation activity. Binds preferentially to double-stranded oligonucleotide direct repeats having the consensus half-site sequence 5'-AGGTCA-3' and 4-nt spacing (DR-4). Regulates cholesterol uptake through MYLIP-dependent ubiquitination of LDLR, VLDLR and LRP8; DLDLR and LRP8. Interplays functionally with RORA for the regulation of genes involved in liver metabolism. Induces LPCAT3-dependent phospholipid remodeling in endoplasmic reticulum (ER) membranes of hepatocytes, driving SREBF1 processing and lipogenesis. Via LPCAT3, triggers the incorporation of arachidonate into phosphatidylcholines of ER membranes, increasing membrane dynamics and enabling triacylglycerols transfer to nascent very low-density lipoprotein (VLDL) particles. Via LPCAT3 also counteracts lipid-induced ER stress response and inflammation, likely by modulating SRC kinase membrane compartmentalization and limiting the synthesis of lipid inflammatory mediators. Plays an anti-inflammatory role during the hepatic acute phase response by acting as a corepressor: inhibits the hepatic acute phase response by preventing dissociation of the N-Cor corepressor complex. The sequence is that of Oxysterols receptor LXR-beta (Nr1h2) from Mus musculus (Mouse).